Consider the following 405-residue polypeptide: 3-hydroxy-3-methylglutaryl-coenzyme A reductase (405 aa).

Catalysis depends on charge relay system residues Glu-101 and Asp-305. His-400 acts as the Proton donor in catalysis.

The protein belongs to the HMG-CoA reductase family. Homodimer.

It is found in the cytoplasm. It catalyses the reaction (R)-mevalonate + 2 NADP(+) + CoA = (3S)-3-hydroxy-3-methylglutaryl-CoA + 2 NADPH + 2 H(+). The protein operates within metabolic intermediate biosynthesis; (R)-mevalonate biosynthesis; (R)-mevalonate from acetyl-CoA: step 3/3. Its activity is regulated as follows. Is competitively inhibited by lovastatin (formerly called mevinolin). Lovastatin also blocks the growth of H.salinarum, and this effect is reversed by addition of mevalonate, indicating the critical role that the mevalonate pathway plays in isoprenoid biosynthesis by these archaea. Functionally, catalyzes the NADPH-dependent reductive deacylation of (S)-3-hydroxy-3-methylglutaryl-CoA (HMG-CoA) to (R)-mevalonate. Cannot use NADH instead of NADPH. Functions in the mevalonate (MVA) pathway leading to isopentenyl diphosphate (IPP), a key precursor for the biosynthesis of isoprenoid compounds such as archaeal membrane lipids. This is 3-hydroxy-3-methylglutaryl-coenzyme A reductase (hmgA) from Halobacterium salinarum (strain ATCC 29341 / DSM 671 / R1).